We begin with the raw amino-acid sequence, 54 residues long: Defensin-like protein (54 aa).

A Pyrrolidone carboxylic acid modification is found at Q1. Intrachain disulfides connect C4–C52, C16–C37, C22–C47, and C26–C49.

Belongs to the DEFL family. In terms of assembly, monomer.

It localises to the secreted. Its function is as follows. Taste-modifying protein; sweet-tasting. It is 2000 sweeter than sucrose on a molar basis. Has a pH-specific antimicrobial activity against bacteria (B.subtilis, E.coli and S.aureus) and the fungus C.albicans. This Pentadiplandra brazzeana protein is Defensin-like protein.